A 336-amino-acid chain; its full sequence is Fructose-1,6-bisphosphatase class 1 (336 aa).

Residues glutamate 90, aspartate 112, leucine 114, and aspartate 115 each contribute to the Mg(2+) site. Substrate is bound by residues 115–118 (DGSS), asparagine 211, and lysine 277. Glutamate 283 is a binding site for Mg(2+).

Belongs to the FBPase class 1 family. In terms of assembly, homotetramer. Mg(2+) serves as cofactor.

It localises to the cytoplasm. It catalyses the reaction beta-D-fructose 1,6-bisphosphate + H2O = beta-D-fructose 6-phosphate + phosphate. It functions in the pathway carbohydrate biosynthesis; gluconeogenesis. The polypeptide is Fructose-1,6-bisphosphatase class 1 (Stutzerimonas stutzeri (strain A1501) (Pseudomonas stutzeri)).